A 318-amino-acid polypeptide reads, in one-letter code: Homoserine kinase (318 aa).

97 to 107 (PIGSGLGSSAC) provides a ligand contact to ATP.

Belongs to the GHMP kinase family. Homoserine kinase subfamily.

The protein resides in the cytoplasm. The catalysed reaction is L-homoserine + ATP = O-phospho-L-homoserine + ADP + H(+). The protein operates within amino-acid biosynthesis; L-threonine biosynthesis; L-threonine from L-aspartate: step 4/5. In terms of biological role, catalyzes the ATP-dependent phosphorylation of L-homoserine to L-homoserine phosphate. The polypeptide is Homoserine kinase (Vibrio atlanticus (strain LGP32) (Vibrio splendidus (strain Mel32))).